The sequence spans 389 residues: MSEYLFTSESVSEGHPDKVADQVSDAILDAILAQDPKARVAAETLVNTGLCVLAGEITTTAQVDYIKVARETIKRIGYNSSELGFDANGCAVGVYYDQQSPDIAQGVNEGEGIDLNQGAGDQGLMFGYACDETPTLMPFAIYYSHRLMQRQSELRKDGLLPWLRPDAKAQLTVVYDSESGKVKRIDTVVLSTQHDPEIGYEELKNAVIEQIIKPVLPSELLTDETKYLINPTGRFVIGGPQGDCGLTGRKIIVDTYGGAAPHGGGAFSGKDPSKVDRSAAYACRYVAKNIVAAGLATQCQIQVSYAIGVAEPTSISIDTFGTGKISEEKLITLVREHFDLRPKGIVQMLDLLRPIYSKSAAYGHFGREEPEFTWERTDKAAALRAAAGL.

His15 serves as a coordination point for ATP. Asp17 contributes to the Mg(2+) binding site. Glu43 contributes to the K(+) binding site. L-methionine contacts are provided by Glu56 and Gln99. Residues Gln99 to Glu109 form a flexible loop region. ATP-binding positions include Asp166–Lys168, Arg234–Phe235, Asp243, Arg249–Lys250, Ala266, and Lys270. Asp243 lines the L-methionine pocket. L-methionine is bound at residue Lys274.

It belongs to the AdoMet synthase family. In terms of assembly, homotetramer; dimer of dimers. Mg(2+) is required as a cofactor. K(+) serves as cofactor.

The protein localises to the cytoplasm. It carries out the reaction L-methionine + ATP + H2O = S-adenosyl-L-methionine + phosphate + diphosphate. It participates in amino-acid biosynthesis; S-adenosyl-L-methionine biosynthesis; S-adenosyl-L-methionine from L-methionine: step 1/1. Functionally, catalyzes the formation of S-adenosylmethionine (AdoMet) from methionine and ATP. The overall synthetic reaction is composed of two sequential steps, AdoMet formation and the subsequent tripolyphosphate hydrolysis which occurs prior to release of AdoMet from the enzyme. In Neisseria meningitidis serogroup C / serotype 2a (strain ATCC 700532 / DSM 15464 / FAM18), this protein is S-adenosylmethionine synthase.